Reading from the N-terminus, the 267-residue chain is Phosphonates import ATP-binding protein PhnC 2 (267 aa).

One can recognise an ABC transporter domain in the interval 3-247 (LSLDGVDLVH…ALDALYANEQ (245 aa)). 36-43 (GPSGAGKT) provides a ligand contact to ATP.

It belongs to the ABC transporter superfamily. Phosphonates importer (TC 3.A.1.9.1) family. As to quaternary structure, the complex is composed of two ATP-binding proteins (PhnC), two transmembrane proteins (PhnE) and a solute-binding protein (PhnD).

The protein resides in the cell inner membrane. The catalysed reaction is phosphonate(out) + ATP + H2O = phosphonate(in) + ADP + phosphate + H(+). Part of the ABC transporter complex PhnCDE involved in phosphonates import. Responsible for energy coupling to the transport system. This is Phosphonates import ATP-binding protein PhnC 2 from Pseudomonas aeruginosa (strain UCBPP-PA14).